Reading from the N-terminus, the 155-residue chain is Small ribosomal subunit protein uS9 (155 aa).

This sequence belongs to the universal ribosomal protein uS9 family.

The protein is Small ribosomal subunit protein uS9 of Rhizobium leguminosarum bv. trifolii (strain WSM2304).